A 914-amino-acid polypeptide reads, in one-letter code: Linoleate 13S-lipoxygenase 3-1, chloroplastic (914 aa).

Residues 1–83 (MALAKEIMGI…PEKAVRFKVR (83 aa)) constitute a chloroplast transit peptide. The PLAT domain occupies 96–218 (LKETIVKHLD…DHPGKRIFFS (123 aa)). Residues 221 to 914 (PYLPDETPAG…CRGVPNSVSI (694 aa)) enclose the Lipoxygenase domain. Fe cation contacts are provided by His-574, His-579, His-765, Asn-769, and Ile-914.

The protein belongs to the lipoxygenase family. As to quaternary structure, monomer. The cofactor is Fe cation. Expressed in roots and leaves. Detected in tubers and flower buds.

It is found in the plastid. The protein localises to the chloroplast stroma. Its subcellular location is the chloroplast thylakoid. The catalysed reaction is (9Z,12Z)-octadecadienoate + O2 = (13S)-hydroperoxy-(9Z,11E)-octadecadienoate. It catalyses the reaction (9Z,12Z,15Z)-octadecatrienoate + O2 = (13S)-hydroperoxy-(9Z,11E,15Z)-octadecatrienoate. The protein operates within lipid metabolism; oxylipin biosynthesis. In terms of biological role, plant lipoxygenases may be involved in a number of diverse aspects of plant physiology including growth and development, pest resistance, and senescence or responses to wounding. Required for the regulation of wound-induced gene expression, but is not involved in the bulk production of jasmonate upon wounding. Catalyzes the hydroperoxidation of lipids containing a cis,cis-1,4-pentadiene structure. Linolenic acid is the preferred substrate, before linoleic and arachidonic acids. The chain is Linoleate 13S-lipoxygenase 3-1, chloroplastic (LOX3.1) from Solanum tuberosum (Potato).